Reading from the N-terminus, the 197-residue chain is Imidazoleglycerol-phosphate dehydratase (197 aa).

It belongs to the imidazoleglycerol-phosphate dehydratase family.

It is found in the cytoplasm. The enzyme catalyses D-erythro-1-(imidazol-4-yl)glycerol 3-phosphate = 3-(imidazol-4-yl)-2-oxopropyl phosphate + H2O. The protein operates within amino-acid biosynthesis; L-histidine biosynthesis; L-histidine from 5-phospho-alpha-D-ribose 1-diphosphate: step 6/9. The protein is Imidazoleglycerol-phosphate dehydratase of Syntrophus aciditrophicus (strain SB).